A 205-amino-acid polypeptide reads, in one-letter code: uncharacterized protein (205 aa).

This is an uncharacterized protein from Methanococcus vannielii (strain ATCC 35089 / DSM 1224 / JCM 13029 / OCM 148 / SB).